The chain runs to 350 residues: Chorismate synthase (350 aa).

Position 48 (Arg-48) interacts with NADP(+). FMN contacts are provided by residues Arg-125–Ser-127, Gly-277, Lys-292–Ser-296, and Arg-318.

The protein belongs to the chorismate synthase family. As to quaternary structure, homotetramer. It depends on FMNH2 as a cofactor.

The enzyme catalyses 5-O-(1-carboxyvinyl)-3-phosphoshikimate = chorismate + phosphate. The protein operates within metabolic intermediate biosynthesis; chorismate biosynthesis; chorismate from D-erythrose 4-phosphate and phosphoenolpyruvate: step 7/7. In terms of biological role, catalyzes the anti-1,4-elimination of the C-3 phosphate and the C-6 proR hydrogen from 5-enolpyruvylshikimate-3-phosphate (EPSP) to yield chorismate, which is the branch point compound that serves as the starting substrate for the three terminal pathways of aromatic amino acid biosynthesis. This reaction introduces a second double bond into the aromatic ring system. This chain is Chorismate synthase, found in Maridesulfovibrio salexigens (strain ATCC 14822 / DSM 2638 / NCIMB 8403 / VKM B-1763) (Desulfovibrio salexigens).